Reading from the N-terminus, the 308-residue chain is MAVLLLGEVTNGALNRDATAKAVAAVKALGDVTVLCAGASAKAAAEEAAKIAGVAKVLVAEDALYGHRLAEPTAALIVGLAGDYSHIAAPATTDAKNVMPRVAALLDVMVLSDVSAILDADTFERPIYAGNAIQVVKSKDAKKVFTIRTASFDAAGEGGTAPVTETAAAADPGLSSWVADEVAESDRPELTSARRVVSGGRGLGSKESFAIIEELADKLGAAVGASRAAVDSGYAPNDWQVGQTGKVVAPELYVAVGISGAIQHLAGMKDSKVIVAINKDEEAPIFQIADYGLVGDLFSVVPELTGKL.

Position 252-280 (252-280 (LYVAVGISGAIQHLAGMKDSKVIVAINKD)) interacts with FAD.

This sequence belongs to the ETF alpha-subunit/FixB family. In terms of assembly, heterodimer of an alpha and a beta subunit. The cofactor is FAD.

Functionally, the electron transfer flavoprotein serves as a specific electron acceptor for other dehydrogenases. It transfers the electrons to the main respiratory chain via ETF-ubiquinone oxidoreductase (ETF dehydrogenase). This is Electron transfer flavoprotein subunit alpha (etfA) from Paracoccus denitrificans.